The chain runs to 353 residues: Replication factor C subunit 2 (353 aa).

At Met1 the chain carries N-acetylmethionine. ATP contacts are provided by residues Val28, Arg32, 65-73 (GPPGTGKTS), Asn171, and Arg229.

This sequence belongs to the activator 1 small subunits family. As to quaternary structure, replication factor C (RFC) is a heteropentamer of subunits RFC1, RFC2, RFC3, RFC4 and RFC5 and forms a complex with POL30/PCNA in the presence of ATP. Component of the RAD24-RFC complex which consists of RAD14, RFC2, RFC3, RFC4 and RFC5 and associates with the checkpoint clamp DDC1:MEC3:RAD17 complex. Component of the ELG1-RFC complex which consists of ELG1, RFC2, RFC3, RFC4 and RFC5. Component of the CTF18-RFC complex, which consists of CTF18, CTF8, DCC1, RFC2, RFC3, RFC4 and RFC5. RFC2 interacts with ECO1.

It localises to the nucleus. Component of ATP-dependent clamp loader (RFC and RFC-like) complexes for DNA clamps, such as the POL30/PCNA homotrimer and the checkpoint clamp DDC1:MEC3:RAD17 complex. During a clamp loading circle, the RFC:clamp complex binds to DNA and the recognition of the double-stranded/single-stranded junction stimulates ATP hydrolysis by RFC. The complex presumably provides bipartite ATP sites in which one subunit supplies a catalytic site for hydrolysis of ATP bound to the neighboring subunit. Dissociation of RFC from the clamp leaves the clamp encircling DNA. Component of the replication factor C (RFC or activator 1) complex which loads POL30/PCNA and acts during elongation of primed DNA templates by DNA polymerase delta and epsilon. RFC has an essential but redundant activity in sister chromatid cohesion establishment. Component of the RFC-like complex CTF18-RFC which is required for efficient establishment of chromosome cohesion during S-phase and may load or unload POL30/PCNA. Component of the RFC-like RAD24-RFC complex which loads the checkpoint clamp DDC1:MEC3:RAD17 complex and is involved in DNA repair pathways. Component of the RFC-like ELG1-RFC complex which appears to have a role in DNA replication, replication fork re-start, recombination and repair. RFC2 binds ATP and single-stranded DNA. This chain is Replication factor C subunit 2 (RFC2), found in Saccharomyces cerevisiae (strain ATCC 204508 / S288c) (Baker's yeast).